Consider the following 368-residue polypeptide: C2H2 type master regulator of conidiophore development BrlA (368 aa).

Residues C268–F292 form a C2H2-type 1; degenerate zinc finger. A C2H2-type 2 zinc finger spans residues F300 to H323. Positions A338–Y368 are disordered. Positions K359–Y368 are enriched in basic and acidic residues.

It is found in the nucleus. Functionally, brlA, abaA and wetA are pivotal regulators of conidiophore development and conidium maturation. They act individually and together to regulate their own expression and that of numerous other sporulation-specific genes. BrlA, abaA and wetA act together to positively regulate the expression of the Pks1 gene cluster that mediates the biosynthesis of an anthraquinone derivative pigment that contributes to conidial pigmentation that provides protection from UV radiation, heat and cold stress. In Metarhizium robertsii (strain ARSEF 23 / ATCC MYA-3075) (Metarhizium anisopliae (strain ARSEF 23)), this protein is C2H2 type master regulator of conidiophore development BrlA.